The chain runs to 280 residues: Chaperone protein LppX (280 aa).

Positions 1-18 (MRKWLIFLLIAAVAGLSA) are cleaved as a signal peptide. The N-palmitoyl cysteine moiety is linked to residue Cys-19. The S-diacylglycerol cysteine moiety is linked to residue Cys-19.

It is found in the cell membrane. Is required for the expression of the adjacently encoded xylanase Xyn11E in an active form. LppX seems to act as a specific chaperone necessary for the correct folding of the xylanase during secretion across the cytoplasmic membrane. The sequence is that of Chaperone protein LppX from Paenibacillus barcinonensis.